Reading from the N-terminus, the 311-residue chain is Dihydroorotate dehydrogenase B (NAD(+)), catalytic subunit (311 aa).

FMN is bound by residues Ser24 and 48 to 49 (KA). Substrate contacts are provided by residues Lys48 and 72 to 76 (NAIGL). Residues Asn104 and Asn132 each contribute to the FMN site. Residue Asn132 participates in substrate binding. The active-site Nucleophile is the Cys135. FMN contacts are provided by Lys170 and Ile196. 197 to 198 (NT) is a binding site for substrate. Residues Gly222, 248 to 249 (GG), and 270 to 271 (GT) each bind FMN.

Belongs to the dihydroorotate dehydrogenase family. Type 1 subfamily. In terms of assembly, heterotetramer of 2 PyrK and 2 PyrD type B subunits. FMN is required as a cofactor.

The protein resides in the cytoplasm. It carries out the reaction (S)-dihydroorotate + NAD(+) = orotate + NADH + H(+). It functions in the pathway pyrimidine metabolism; UMP biosynthesis via de novo pathway; orotate from (S)-dihydroorotate (NAD(+) route): step 1/1. Catalyzes the conversion of dihydroorotate to orotate with NAD(+) as electron acceptor. In Lactococcus lactis subsp. lactis (strain IL1403) (Streptococcus lactis), this protein is Dihydroorotate dehydrogenase B (NAD(+)), catalytic subunit (pyrDB).